The following is a 403-amino-acid chain: uncharacterized protein (403 aa).

The first 26 residues, 1–26 (MYKFKTNLFLVIYFIAIFSIESSISS), serve as a signal peptide directing secretion. Residues 27–381 (FNTEINSNSN…DSDNSSFGIS (355 aa)) are Extracellular-facing. Residues Asn58, Asn90, Asn93, Asn124, Asn137, Asn371, and Asn375 are each glycosylated (N-linked (GlcNAc...) asparagine). A helical membrane pass occupies residues 382–402 (IQKYLNSFLNSFIIILIINII). Ile403 is a topological domain (cytoplasmic).

The protein localises to the membrane. This is an uncharacterized protein from Dictyostelium discoideum (Social amoeba).